The sequence spans 280 residues: Dopamine receptor-interacting protein 1 (280 aa).

As to quaternary structure, interacts with DRD1, the dopamine D1 receptor.

In terms of biological role, could be a regulator of the dopamine receptor signaling pathway. This chain is Dopamine receptor-interacting protein 1 (DORIP1), found in Bos taurus (Bovine).